Consider the following 320-residue polypeptide: Mitochondrial glycine transporter (320 aa).

3 Solcar repeats span residues 8-92 (SKTT…LRQG), 121-205 (LSNW…LKRR), and 223-307 (SSSS…LILR). Transmembrane regions (helical) follow at residues 14–39 (FAAG…TRVQ), 67–93 (GTLP…RQGL), 127–152 (LATG…VRYE), 180–203 (GFGA…EQLK), 227–253 (INFV…KTRL), and 282–300 (GLGL…AWTV).

This sequence belongs to the mitochondrial carrier (TC 2.A.29) family. SLC25A38 subfamily.

It is found in the mitochondrion inner membrane. The catalysed reaction is glycine(in) = glycine(out). Mitochondrial glycine transporter that imports glycine into the mitochondrial matrix. Plays an important role in providing glycine for the first enzymatic step in heme biosynthesis, the condensation of glycine with succinyl-CoA to produce 5-aminolevulinate (ALA) in the mitochondrial matrix. The chain is Mitochondrial glycine transporter from Aspergillus fumigatus (strain CBS 144.89 / FGSC A1163 / CEA10) (Neosartorya fumigata).